The following is a 270-amino-acid chain: MTSVSSDSRKQFKGSGDHVFDFDNKENHDFLSLTIKQDNNNNNNNNTNVSLSPSIKSQATSSTGGNKNQIFSQMRELDKKSLMLIETYYRDKLITYQEKLKRELEQIYNKKLQSLKIQYDSDSYLKFKQFELETKKALLLLLKEFQDLKKSKQQQEKQLKLQQIKQESNNNNNNNNNNNNNNNNNNNNNNNNDDDQQKDIDNSNDIVNDFKTDKILKEKEEILNKLELITKSITDLFIQQVDISTDTIDFQSFLSNIVATTTTTTATISN.

Disordered stretches follow at residues 35–67 (IKQD…GGNK) and 168–204 (SNNN…DNSN). Over residues 39-48 (NNNNNNNNTN) the composition is skewed to low complexity. Polar residues predominate over residues 49 to 67 (VSLSPSIKSQATSSTGGNK). A compositionally biased stretch (low complexity) spans 168-191 (SNNNNNNNNNNNNNNNNNNNNNNN).

This is an uncharacterized protein from Dictyostelium discoideum (Social amoeba).